The primary structure comprises 321 residues: MARSKIALIGAGQIGGTLALLAGLKELGDVVLFDLVEGVPQGKALDLAELSPVAGFDAAFAGTGAYEQIAGADVVIVTAGVPRKPGMSRDDLLAVNLKVMEQAGAGIAKYAPDAFVICVTNPLDAMVWALQKASGLPRHKVVGMAGVLDSARLRYFLADEFNVSVEDVTAMVLGGHGDTMVPLMRYCTVAGIPVPDLIRIGWTSTDRIEAIVTRTRNGGAEIVELLKSGSAFYAPAASAIVMAESYLKDKKRVLPVAAPLSGEYGFRDLYVGVPAVIGARGVERIVELELDRAERAQFEQSVASVQGLVDACAKIAPDLVR.

NAD(+) is bound by residues 10–15 (GAGQIG) and aspartate 34. Arginine 83 and arginine 89 together coordinate substrate. Residues asparagine 96 and 119–121 (VTN) contribute to the NAD(+) site. Positions 121 and 152 each coordinate substrate. Histidine 176 acts as the Proton acceptor in catalysis.

The protein belongs to the LDH/MDH superfamily. MDH type 3 family.

It catalyses the reaction (S)-malate + NAD(+) = oxaloacetate + NADH + H(+). Functionally, catalyzes the reversible oxidation of malate to oxaloacetate. In Azorhizobium caulinodans (strain ATCC 43989 / DSM 5975 / JCM 20966 / LMG 6465 / NBRC 14845 / NCIMB 13405 / ORS 571), this protein is Malate dehydrogenase.